The following is a 396-amino-acid chain: MKSNNALIVILGTVTLDAVGIGLVMPVLPGLLRDIVHSDSIASHYGVLLALYALMQFLCAPVLGALSDRFGRRPVLLASLLGATIDYAIMATTPVLWILYAGRIVAGITGATGAVAGAYIADITDGEDRARHFGLMSACFGVGMVAGPVAGGLLGAISLHAPFLAAAVLNGLNLLLGCFLMQESHKGERRPMPLRAFNPVSSFRWARGMTIVAALMTVFFIMQLVGQVPAALWVIFGEDRFRWSATMIGLSLAVFGILHALAQAFVTGPATKRFGEKQAIIAGMAADALGYVLLAFATRGWMAFPIMILLASGGIGMPALQAMLSRQVDDDHQGQLQGSLAALTSLTSITGPLIVTAIYAASASTWNGLAWIVGAALYLVCLPALRRGAWSRATST.

Topologically, residues 1-6 (MKSNNA) are cytoplasmic. The chain crosses the membrane as a helical span at residues 7–27 (LIVILGTVTLDAVGIGLVMPV). Topologically, residues 28 to 45 (LPGLLRDIVHSDSIASHY) are periplasmic. Residues 46–66 (GVLLALYALMQFLCAPVLGAL) traverse the membrane as a helical segment. Residues 67-79 (SDRFGRRPVLLAS) are Cytoplasmic-facing. The helical transmembrane segment at 80–100 (LLGATIDYAIMATTPVLWILY) threads the bilayer. Topologically, residues 101–103 (AGR) are periplasmic. A helical membrane pass occupies residues 104–124 (IVAGITGATGAVAGAYIADIT). Over 125 to 138 (DGEDRARHFGLMSA) the chain is Cytoplasmic. A helical membrane pass occupies residues 139 to 159 (CFGVGMVAGPVAGGLLGAISL). Residue H160 is a topological domain, periplasmic. A helical transmembrane segment spans residues 161–181 (APFLAAAVLNGLNLLLGCFLM). The Cytoplasmic segment spans residues 182 to 210 (QESHKGERRPMPLRAFNPVSSFRWARGMT). Residues 211-231 (IVAALMTVFFIMQLVGQVPAA) traverse the membrane as a helical segment. Over 232 to 246 (LWVIFGEDRFRWSAT) the chain is Periplasmic. A helical membrane pass occupies residues 247 to 267 (MIGLSLAVFGILHALAQAFVT). The Cytoplasmic portion of the chain corresponds to 268–277 (GPATKRFGEK). The chain crosses the membrane as a helical span at residues 278–298 (QAIIAGMAADALGYVLLAFAT). Residue R299 is a topological domain, periplasmic. A helical membrane pass occupies residues 300-320 (GWMAFPIMILLASGGIGMPAL). Residues 321–339 (QAMLSRQVDDDHQGQLQGS) are Cytoplasmic-facing. A helical transmembrane segment spans residues 340-360 (LAALTSLTSITGPLIVTAIYA). Residues 361 to 364 (ASAS) lie on the Periplasmic side of the membrane. A helical transmembrane segment spans residues 365 to 385 (TWNGLAWIVGAALYLVCLPAL). Over 386–396 (RRGAWSRATST) the chain is Cytoplasmic.

This sequence belongs to the major facilitator superfamily. TCR/Tet family.

The protein localises to the cell inner membrane. In terms of biological role, resistance to tetracycline by an active tetracycline efflux. This is an energy-dependent process that decreases the accumulation of the antibiotic in whole cells. This protein functions as a metal-tetracycline/H(+) antiporter. In Escherichia coli, this protein is Tetracycline resistance protein, class C (tetA).